The chain runs to 322 residues: Transaldolase (322 aa).

Lysine 136 serves as the catalytic Schiff-base intermediate with substrate.

This sequence belongs to the transaldolase family. Type 1 subfamily. Homodimer.

Its subcellular location is the cytoplasm. It catalyses the reaction D-sedoheptulose 7-phosphate + D-glyceraldehyde 3-phosphate = D-erythrose 4-phosphate + beta-D-fructose 6-phosphate. Its pathway is carbohydrate degradation; pentose phosphate pathway; D-glyceraldehyde 3-phosphate and beta-D-fructose 6-phosphate from D-ribose 5-phosphate and D-xylulose 5-phosphate (non-oxidative stage): step 2/3. In terms of biological role, transaldolase is important for the balance of metabolites in the pentose-phosphate pathway. This chain is Transaldolase, found in Xanthomonas campestris pv. campestris (strain B100).